We begin with the raw amino-acid sequence, 380 residues long: Cytochrome b (380 aa).

4 consecutive transmembrane segments (helical) span residues 34-54, 78-99, 114-134, and 179-199; these read FGSL…LLAA, WLIR…YLHI, WNTG…GYVL, and FFAL…IHLA. Residues His-84 and His-98 each coordinate heme b. 2 residues coordinate heme b: His-183 and His-197. His-202 is a binding site for a ubiquinone. 4 helical membrane-spanning segments follow: residues 227-247, 289-309, 321-341, and 348-368; these read LKDI…ALFS, LGGV…PLLH, LSQL…WIGS, and FIII…ILFP.

Belongs to the cytochrome b family. As to quaternary structure, the cytochrome bc1 complex contains 11 subunits: 3 respiratory subunits (MT-CYB, CYC1 and UQCRFS1), 2 core proteins (UQCRC1 and UQCRC2) and 6 low-molecular weight proteins (UQCRH/QCR6, UQCRB/QCR7, UQCRQ/QCR8, UQCR10/QCR9, UQCR11/QCR10 and a cleavage product of UQCRFS1). This cytochrome bc1 complex then forms a dimer. It depends on heme b as a cofactor.

The protein localises to the mitochondrion inner membrane. Functionally, component of the ubiquinol-cytochrome c reductase complex (complex III or cytochrome b-c1 complex) that is part of the mitochondrial respiratory chain. The b-c1 complex mediates electron transfer from ubiquinol to cytochrome c. Contributes to the generation of a proton gradient across the mitochondrial membrane that is then used for ATP synthesis. This is Cytochrome b (MT-CYB) from Cyrtonyx montezumae (Montezuma quail).